The primary structure comprises 358 residues: Probable dual-specificity RNA methyltransferase RlmN 2 (358 aa).

Glu90 (proton acceptor) is an active-site residue. The Radical SAM core domain occupies 96 to 328 (SGIRRTVCVS…VNTCRYTKGD (233 aa)). Cys103 and Cys334 are oxidised to a cystine. Residues Cys110, Cys114, and Cys117 each coordinate [4Fe-4S] cluster. S-adenosyl-L-methionine contacts are provided by residues 160–161 (GE), Ser192, 215–217 (SLH), and Asn291. Catalysis depends on Cys334, which acts as the S-methylcysteine intermediate.

This sequence belongs to the radical SAM superfamily. RlmN family. It depends on [4Fe-4S] cluster as a cofactor.

It localises to the cytoplasm. It catalyses the reaction adenosine(2503) in 23S rRNA + 2 reduced [2Fe-2S]-[ferredoxin] + 2 S-adenosyl-L-methionine = 2-methyladenosine(2503) in 23S rRNA + 5'-deoxyadenosine + L-methionine + 2 oxidized [2Fe-2S]-[ferredoxin] + S-adenosyl-L-homocysteine. It carries out the reaction adenosine(37) in tRNA + 2 reduced [2Fe-2S]-[ferredoxin] + 2 S-adenosyl-L-methionine = 2-methyladenosine(37) in tRNA + 5'-deoxyadenosine + L-methionine + 2 oxidized [2Fe-2S]-[ferredoxin] + S-adenosyl-L-homocysteine. Functionally, specifically methylates position 2 of adenine 2503 in 23S rRNA and position 2 of adenine 37 in tRNAs. The sequence is that of Probable dual-specificity RNA methyltransferase RlmN 2 from Protochlamydia amoebophila (strain UWE25).